The sequence spans 471 residues: MASCVGSRTLSKDDVNYRMHFRMINEQQVEDITIDFFYRPHTITLLSFTIVSLMYFAFTRDDSVPEDNIWRGILSVIFFFLIISVLAFPNGPFTRPHPALWRMVFGLSVLYFLFLVFLLFLNFEQVKSLMYWLDPNLRYATREADIMEYAVNCHVITWERIVSHFDIFAFGHFWGWAMKALLIRSYGLCWTISITWELTELFFMHLLPNFAECWWDQVILDILLCNGGGIWLGMVVCRFLEMRTYHWASFKDIHTTTGKIKRAVLQFTPASWTYVRWFDPKSSFQRVAGVYLFMIIWQLTELNTFFLKHIFVFQASHPLSWCRILFIGCITAPTVRQYYAYLTDTQCKRVGTQCWVFGVIGFLEAIVCIKFGQDLFSKTQILYVVFWLLCVAFTTFLCLYGMVWYAEHYGHREKTYSECEDGTPEISWHHGKGSKGSEDSPPKHSSNNESHSSRRRNRHSKSKVTNGVGKK.

Alanine 2 carries the post-translational modification N-acetylalanine. The Cytoplasmic portion of the chain corresponds to 2-35 (ASCVGSRTLSKDDVNYRMHFRMINEQQVEDITID). A helical transmembrane segment spans residues 36–56 (FFYRPHTITLLSFTIVSLMYF). Topologically, residues 57–72 (AFTRDDSVPEDNIWRG) are lumenal. The helical transmembrane segment at 73-93 (ILSVIFFFLIISVLAFPNGPF) threads the bilayer. Over 94-102 (TRPHPALWR) the chain is Cytoplasmic. Residues 103–123 (MVFGLSVLYFLFLVFLLFLNF) traverse the membrane as a helical segment. The Lumenal portion of the chain corresponds to 124-160 (EQVKSLMYWLDPNLRYATREADIMEYAVNCHVITWER). The chain crosses the membrane as a helical span at residues 161-181 (IVSHFDIFAFGHFWGWAMKAL). Residues 182-186 (LIRSY) lie on the Cytoplasmic side of the membrane. Residues 187–207 (GLCWTISITWELTELFFMHLL) form a helical membrane-spanning segment. The Lumenal segment spans residues 208-216 (PNFAECWWD). The helical transmembrane segment at 217–237 (QVILDILLCNGGGIWLGMVVC) threads the bilayer. Topologically, residues 238-286 (RFLEMRTYHWASFKDIHTTTGKIKRAVLQFTPASWTYVRWFDPKSSFQR) are cytoplasmic. Residues 287-307 (VAGVYLFMIIWQLTELNTFFL) form a helical membrane-spanning segment. Topologically, residues 308–309 (KH) are lumenal. A helical transmembrane segment spans residues 310–330 (IFVFQASHPLSWCRILFIGCI). The Cytoplasmic portion of the chain corresponds to 331 to 355 (TAPTVRQYYAYLTDTQCKRVGTQCW). A helical transmembrane segment spans residues 356–376 (VFGVIGFLEAIVCIKFGQDLF). Over 377-380 (SKTQ) the chain is Lumenal. Residues 381 to 401 (ILYVVFWLLCVAFTTFLCLYG) form a helical membrane-spanning segment. At 402-471 (MVWYAEHYGH…SKVTNGVGKK (70 aa)) the chain is on the cytoplasmic side. Residues serine 417, serine 440, and serine 452 each carry the phosphoserine modification. The segment at 426-471 (ISWHHGKGSKGSEDSPPKHSSNNESHSSRRRNRHSKSKVTNGVGKK) is disordered. Basic residues predominate over residues 453–462 (SRRRNRHSKS).

Belongs to the phosphatidyl serine synthase family.

The protein localises to the endoplasmic reticulum membrane. It catalyses the reaction a 1,2-diacyl-sn-glycero-3-phosphoethanolamine + L-serine = a 1,2-diacyl-sn-glycero-3-phospho-L-serine + ethanolamine. The catalysed reaction is a 1,2-diacyl-sn-glycero-3-phosphocholine + L-serine = a 1,2-diacyl-sn-glycero-3-phospho-L-serine + choline. The protein operates within phospholipid metabolism; phosphatidylserine biosynthesis. With respect to regulation, inhibited by exogenous phosphatidylserine. Its function is as follows. Catalyzes a base-exchange reaction in which the polar head group of phosphatidylethanolamine (PE) or phosphatidylcholine (PC) is replaced by L-serine. Catalyzes mainly the conversion of phosphatidylcholine. Also converts, in vitro and to a lesser extent, phosphatidylethanolamine. The sequence is that of Phosphatidylserine synthase 1 (PTDSS1) from Cricetulus griseus (Chinese hamster).